We begin with the raw amino-acid sequence, 162 residues long: ATP synthase subunit b (162 aa).

Residues 6–25 traverse the membrane as a helical segment; it reads TLFTLVTFLVLMLAVGKVAW.

The protein belongs to the ATPase B chain family. F-type ATPases have 2 components, F(1) - the catalytic core - and F(0) - the membrane proton channel. F(1) has five subunits: alpha(3), beta(3), gamma(1), delta(1), epsilon(1). F(0) has three main subunits: a(1), b(2) and c(10-14). The alpha and beta chains form an alternating ring which encloses part of the gamma chain. F(1) is attached to F(0) by a central stalk formed by the gamma and epsilon chains, while a peripheral stalk is formed by the delta and b chains.

It is found in the cell membrane. Its function is as follows. F(1)F(0) ATP synthase produces ATP from ADP in the presence of a proton or sodium gradient. F-type ATPases consist of two structural domains, F(1) containing the extramembraneous catalytic core and F(0) containing the membrane proton channel, linked together by a central stalk and a peripheral stalk. During catalysis, ATP synthesis in the catalytic domain of F(1) is coupled via a rotary mechanism of the central stalk subunits to proton translocation. Functionally, component of the F(0) channel, it forms part of the peripheral stalk, linking F(1) to F(0). The chain is ATP synthase subunit b from Lacticaseibacillus paracasei (strain ATCC 334 / BCRC 17002 / CCUG 31169 / CIP 107868 / KCTC 3260 / NRRL B-441) (Lactobacillus paracasei).